The chain runs to 256 residues: Thiazole synthase (256 aa).

Residue Lys96 is the Schiff-base intermediate with DXP of the active site. Residues Gly157, 183–184 (AG), and 205–206 (NT) each bind 1-deoxy-D-xylulose 5-phosphate.

Belongs to the ThiG family. In terms of assembly, homotetramer. Forms heterodimers with either ThiH or ThiS.

Its subcellular location is the cytoplasm. The enzyme catalyses [ThiS sulfur-carrier protein]-C-terminal-Gly-aminoethanethioate + 2-iminoacetate + 1-deoxy-D-xylulose 5-phosphate = [ThiS sulfur-carrier protein]-C-terminal Gly-Gly + 2-[(2R,5Z)-2-carboxy-4-methylthiazol-5(2H)-ylidene]ethyl phosphate + 2 H2O + H(+). It participates in cofactor biosynthesis; thiamine diphosphate biosynthesis. Catalyzes the rearrangement of 1-deoxy-D-xylulose 5-phosphate (DXP) to produce the thiazole phosphate moiety of thiamine. Sulfur is provided by the thiocarboxylate moiety of the carrier protein ThiS. In vitro, sulfur can be provided by H(2)S. The polypeptide is Thiazole synthase (Bacillus cereus (strain G9842)).